The sequence spans 136 residues: Large ribosomal subunit protein eL27 (136 aa).

The 36-residue stretch at 5–40 (MKPGKVVLVLAGRYSGRKAVIVKNIDDGTSDRPYSH) folds into the KOW domain. 2 positions are modified to N6-acetyllysine: Lys-27 and Lys-93.

The protein belongs to the eukaryotic ribosomal protein eL27 family. Component of the large ribosomal subunit. Interacts with RRP1B. Component of the large ribosomal subunit. Interacts with RRP1B. Interacts with DHX33.

The protein localises to the cytoplasm. Its subcellular location is the cytosol. It localises to the rough endoplasmic reticulum. In terms of biological role, component of the large ribosomal subunit. Required for proper rRNA processing and maturation of 28S and 5.8S rRNAs. The polypeptide is Large ribosomal subunit protein eL27 (RPL27) (Bos taurus (Bovine)).